Consider the following 472-residue polypeptide: FAD-linked oxidoreductase azaL (472 aa).

The signal sequence occupies residues 1–18; sequence MFRTILLCSLGLTTLSSA. Residues Asn-22, Asn-44, Asn-102, Asn-123, Asn-227, Asn-246, Asn-273, Asn-305, Asn-318, Asn-390, and Asn-415 are each glycosylated (N-linked (GlcNAc...) asparagine). An FAD-binding PCMH-type domain is found at 54-228; it reads TTYDAPTYIG…TSATYKIYNA (175 aa).

Belongs to the oxygen-dependent FAD-linked oxidoreductase family.

It functions in the pathway secondary metabolite biosynthesis. In terms of biological role, FAD-linked oxidoreductase; part of the gene cluster that mediates the biosynthesis of azaphilones, a class of fungal metabolites characterized by a highly oxygenated pyrano-quinone bicyclic core and exhibiting a broad range of bioactivities. In the first step, the non-reducing polyketide synthase azaA forms the hexaketide precursor from successive condensations of five malonyl-CoA units, presumably with a simple acetyl-CoA starter unit. The reactive polyketide chain then undergoes a PT-mediated C2-C7 cyclization to afford the aromatic ring and is eventually released as an aldehyde through the R-domain. The putative ketoreductase azaE is proposed to catalyze the reduction of the terminal ketone resulting in the early culture product FK17-P2a. The monooxygenase azaH was demonstrated to be the only enzyme required to convert FK17-P2a to azanigerone E. AzaH first hydroxylates the benzaldehyde intermediate FK17-P2a at C4, which triggers the formation of the pyran-ring to afford azanigerone E. In parallel, the 2,4-dimethylhexanoyl chain is synthesized by the HR-PKS azaB and is proposed to be transferred to the C4-hydroxyl of azanigerone E by the acyltransferase azaD directly from the ACP domain of azaB. Alternatively, the 2,4-dimethyl-hexanoyl chain may be offloaded from the HR-PKS as a carboxylic acid and converted to an acyl-CoA by azaF. The resulting acyl-CoA molecule could then be taken up as a substrate by AzaD to form azanigerone B. To yield the carboxylic acid substituent in azanigerone A, the hydroxypropyl side chain of azanigerone B would need to undergo a C-C oxidative cleavage catalyzed by cytochrome P450 AzaI. AzaI is proposed to act on a vicinal diol that leads to a C-C bond scission either through an alkoxyradical intermediate or a peroxy complex. In the biosynthesis of azanigerone A, azanigerone B first undergoes hydroxylation at C10, possibly catalyzed by one of the two FAD-dependent monooxygenases encoded in the cluster, azaG or azaL, resulting in the vicinal diol azanigerone C. Oxidative cleavage of azanigerone C by azaI would yield the corresponding aldehyde derivative of azanigerone A. Finally, the dehydrogenase azaJ is proposed to convert the aldehyde functional group into the carboxylic acid, completing the conversion from azanigerone B to azanigerone A. Alternatively, the oxidation of aldehyde to carboxylic acid may be catalyzed by the same P450 enzyme azaI via consecutive oxidation or by endogenous alcohol dehydrogenase. This Aspergillus niger (strain ATCC 1015 / CBS 113.46 / FGSC A1144 / LSHB Ac4 / NCTC 3858a / NRRL 328 / USDA 3528.7) protein is FAD-linked oxidoreductase azaL.